We begin with the raw amino-acid sequence, 431 residues long: Putative transcription factor R429 (431 aa).

The stretch at 28-95 (NKFENMSKAL…SIENCSESLD (68 aa)) forms a coiled coil. Positions 142–187 (SQQENSSESNNDIVKNGTGGSTSKRKKIQPSNRCSGSKTGKVTETK) are disordered. A compositionally biased stretch (low complexity) spans 143–152 (QQENSSESNN). Over residues 170–181 (QPSNRCSGSKTG) the composition is skewed to polar residues. A zinc finger spans residues 218 to 241 (CSVPDCDGEKILNQNDGYMVCKKC).

The protein belongs to the nucleo-cytoplasmic large DNA viruses (NCLDVs) VLTF-3 family.

Its function is as follows. Putative transcription factor. In Acanthamoeba polyphaga (Amoeba), this protein is Putative transcription factor R429.